Consider the following 227-residue polypeptide: Protein SSO0193 (227 aa).

The AMMECR1 domain maps to 15-209 (EIGRLLIEIA…ETKPNGSDII (195 aa)).

The chain is Protein SSO0193 from Saccharolobus solfataricus (strain ATCC 35092 / DSM 1617 / JCM 11322 / P2) (Sulfolobus solfataricus).